Reading from the N-terminus, the 283-residue chain is Pantothenate synthetase (283 aa).

30–37 (MGNLHDGH) contributes to the ATP binding site. The Proton donor role is filled by His-37. Gln-61 contacts (R)-pantoate. Residue Gln-61 participates in beta-alanine binding. 149–152 (GEKD) is an ATP binding site. Gln-155 is a (R)-pantoate binding site. 186 to 189 (LSSR) is an ATP binding site.

Belongs to the pantothenate synthetase family. In terms of assembly, homodimer.

Its subcellular location is the cytoplasm. The enzyme catalyses (R)-pantoate + beta-alanine + ATP = (R)-pantothenate + AMP + diphosphate + H(+). Its pathway is cofactor biosynthesis; (R)-pantothenate biosynthesis; (R)-pantothenate from (R)-pantoate and beta-alanine: step 1/1. Catalyzes the condensation of pantoate with beta-alanine in an ATP-dependent reaction via a pantoyl-adenylate intermediate. The protein is Pantothenate synthetase of Shigella sonnei (strain Ss046).